A 320-amino-acid chain; its full sequence is MGADIYRDVLYIFYPIFFIFSTITQLMLIYLIFYHSPTHLKMLKVFLLNTSLFQIILVVVSCSSQFRMITTAIPIELRSYGLLRYLEAWLGYTMYQVLQTSAFMSGMSILITFVFKYELVRQIEFSKSRVTGIILLFHMPIIASMVMEVIMVINQSLPNEIREQYKFLNANAEEYSIVGALSLKTVPSLINFLLISGSVVASPFISFFFREKILRRINSQFYQHSKWKKSQIQVFVKGLTIQAFLPLIFYVPVFGLYFYCILTHTEILFQQYFMTVVPCLPAFFDPMLTLYFVTPYRRRLKIWMRIEKESKVLPVTSLVK.

7 helical membrane-spanning segments follow: residues 12–32 (IFYP…IYLI), 42–62 (MLKV…VVSC), 95–115 (YQVL…TFVF), 133–153 (IILL…IMVI), 189–209 (LINF…SFFF), 243–263 (AFLP…CILT), and 273–293 (FMTV…LYFV).

This sequence belongs to the nematode receptor-like protein srd family.

It localises to the membrane. In Caenorhabditis elegans, this protein is Serpentine receptor class delta-40 (srd-40).